Reading from the N-terminus, the 393-residue chain is Na(+)/H(+) antiporter NhaA (393 aa).

11 helical membrane-spanning segments follow: residues 14–34 (AAGM…NWSV), 60–80 (LLLW…GLEV), 96–116 (MLPL…FLLF), 125–145 (AGWA…LTLL), 155–175 (VFLL…IALF), 179–199 (QVFW…AYMN), 218–238 (VCIL…GFFI), 263–283 (FLIV…GIVL), 292–312 (LGIA…FSWL), 330–350 (IVAV…ITLL), and 362–382 (YAKL…YLAL).

Belongs to the NhaA Na(+)/H(+) (TC 2.A.33) antiporter family.

Its subcellular location is the cell inner membrane. It carries out the reaction Na(+)(in) + 2 H(+)(out) = Na(+)(out) + 2 H(+)(in). Its function is as follows. Na(+)/H(+) antiporter that extrudes sodium in exchange for external protons. In Pectobacterium atrosepticum (strain SCRI 1043 / ATCC BAA-672) (Erwinia carotovora subsp. atroseptica), this protein is Na(+)/H(+) antiporter NhaA.